The following is a 1012-amino-acid chain: Structural polyprotein (1012 aa).

D30 provides a ligand contact to a divalent metal cation. A Peptidase S50 domain is found at 513–755 (ADKGYEVVAN…AGRQYHLAMA (243 aa)). S652 acts as the Nucleophile in catalysis. K692 is a catalytic residue. A disordered region spans residues 969–1012 (AMEMKHRNPRRALPKPKPKPNAPTQRPPGRLGRWIRTVSDEDLE). The segment covering 975-986 (RNPRRALPKPKP) has biased composition (basic residues). The interaction with VP1 protein stretch occupies residues 1003 to 1012 (IRTVSDEDLE).

In terms of assembly, homotrimer. A central divalent metal stabilizes the VP2 trimer. Interacts with host ITGA4/ITGB1. Homodimer. Interacts (via C-terminus) with VP1 in the cytoplasm. Interacts with VP2. In terms of processing, specific enzymatic cleavages yield mature proteins. The capsid assembly seems to be regulated by polyprotein processing. The protease VP4 cleaves itself off the polyprotein, thus releasing pre-VP2 and VP3 within the infected cell. During capsid assembly, the C-terminus of pre-VP2 is further processed by VP4, giving rise to VP2, the external capsid protein and three small peptides that all stay closely associated with the capsid.

The protein localises to the virion. It is found in the host cytoplasm. In terms of biological role, capsid protein VP2 self assembles to form an icosahedral capsid with a T=13 symmetry, about 70 nm in diameter, and consisting of 260 VP2 trimers. The capsid encapsulates the genomic dsRNA. VP2 is also involved in attachment and entry into the host cell by interacting with host ITGA4/ITGB1. The precursor of VP2 plays an important role in capsid assembly. First, pre-VP2 and VP2 oligomers assemble to form a procapsid. Then, the pre-VP2 intermediates may be processed into VP2 proteins by proteolytic cleavage mediated by VP4 to obtain the mature virion. The final capsid is composed of pentamers and hexamers but VP2 has a natural tendency to assemble into all-pentameric structures. Therefore pre-VP2 may be required to allow formation of the hexameric structures. Its function is as follows. Protease VP4 is a serine protease that cleaves the polyprotein into its final products. Pre-VP2 is first partially cleaved, and may be completely processed by VP4 upon capsid maturation. Functionally, capsid protein VP3 plays a key role in virion assembly by providing a scaffold for the capsid made of VP2. May self-assemble to form a T=4-like icosahedral inner-capsid composed of at least 180 trimers. Plays a role in genomic RNA packaging by recruiting VP1 into the capsid and interacting with the dsRNA genome segments to form a ribonucleoprotein complex. Additionally, the interaction of the VP3 C-terminal tail with VP1 removes the inherent structural blockade of the polymerase active site. Thus, VP3 can also function as a transcriptional activator. In terms of biological role, structural peptide 1 is a small peptide derived from pre-VP2 C-terminus. It destabilizes and perforates cell membranes, suggesting a role during entry. Structural peptide 2 is a small peptide derived from pre-VP2 C-terminus. It is not essential for the virus viability, but viral growth is affected when missing. Its function is as follows. Structural peptide 3 is a small peptide derived from pre-VP2 C-terminus. It is not essential for the virus viability, but viral growth is affected when missing. Functionally, structural peptide 4 is a small peptide derived from pVP2 C-terminus. It is essential for the virus viability. In Gallus gallus (Chicken), this protein is Structural polyprotein.